The primary structure comprises 393 residues: NAD(P)H-quinone oxidoreductase subunit H, chloroplastic (393 aa).

It belongs to the complex I 49 kDa subunit family. NDH is composed of at least 16 different subunits, 5 of which are encoded in the nucleus.

The protein resides in the plastid. It is found in the chloroplast thylakoid membrane. The catalysed reaction is a plastoquinone + NADH + (n+1) H(+)(in) = a plastoquinol + NAD(+) + n H(+)(out). It catalyses the reaction a plastoquinone + NADPH + (n+1) H(+)(in) = a plastoquinol + NADP(+) + n H(+)(out). Its function is as follows. NDH shuttles electrons from NAD(P)H:plastoquinone, via FMN and iron-sulfur (Fe-S) centers, to quinones in the photosynthetic chain and possibly in a chloroplast respiratory chain. The immediate electron acceptor for the enzyme in this species is believed to be plastoquinone. Couples the redox reaction to proton translocation, and thus conserves the redox energy in a proton gradient. This Nasturtium officinale (Watercress) protein is NAD(P)H-quinone oxidoreductase subunit H, chloroplastic.